Here is a 178-residue protein sequence, read N- to C-terminus: MVRGLFIGRFQPPHWGHVWAIKAILSEVDEVIIVLGSAQFNYIEKDPFTVGERIWMLREGLREGGVDLSRVIIVPVPNIENNAAWLSHIKSYLPPFQVAYTGNPFVAMLLKEGGVEVRQQPIFDRGKYVSTRIREMMIKGDSTWRELVPNSVARIIDEVKGVERLRVIITGEAEPHRW.

The protein belongs to the archaeal NMN adenylyltransferase family.

It localises to the cytoplasm. It catalyses the reaction beta-nicotinamide D-ribonucleotide + ATP + H(+) = diphosphate + NAD(+). It functions in the pathway cofactor biosynthesis; NAD(+) biosynthesis; NAD(+) from nicotinamide D-ribonucleotide: step 1/1. The chain is Nicotinamide-nucleotide adenylyltransferase from Caldivirga maquilingensis (strain ATCC 700844 / DSM 13496 / JCM 10307 / IC-167).